Here is a 158-residue protein sequence, read N- to C-terminus: Endoribonuclease YbeY (158 aa).

Zn(2+) is bound by residues histidine 124, histidine 128, and histidine 134.

The protein belongs to the endoribonuclease YbeY family. Zn(2+) serves as cofactor.

It is found in the cytoplasm. Single strand-specific metallo-endoribonuclease involved in late-stage 70S ribosome quality control and in maturation of the 3' terminus of the 16S rRNA. This Latilactobacillus sakei subsp. sakei (strain 23K) (Lactobacillus sakei subsp. sakei) protein is Endoribonuclease YbeY.